A 198-amino-acid polypeptide reads, in one-letter code: Na(+)-translocating NADH-quinone reductase subunit E (198 aa).

The next 6 membrane-spanning stretches (helical) occupy residues 11-31 (SVFIENMALSFFLGMCTFLAV), 35-55 (VSTAFGLGIAVIVVLGISVPV), 77-97 (FLNFITFIGVIAALVQILEMF), 110-130 (GIFLPLITVNCAIFGGVSFMV), 140-160 (VVYGIGAGTGWMLAIVALAGL), and 176-196 (LGITFITVGLMALGFMSFSGI).

Belongs to the NqrDE/RnfAE family. As to quaternary structure, composed of six subunits; NqrA, NqrB, NqrC, NqrD, NqrE and NqrF.

It is found in the cell inner membrane. The enzyme catalyses a ubiquinone + n Na(+)(in) + NADH + H(+) = a ubiquinol + n Na(+)(out) + NAD(+). Functionally, NQR complex catalyzes the reduction of ubiquinone-1 to ubiquinol by two successive reactions, coupled with the transport of Na(+) ions from the cytoplasm to the periplasm. NqrA to NqrE are probably involved in the second step, the conversion of ubisemiquinone to ubiquinol. This is Na(+)-translocating NADH-quinone reductase subunit E from Mannheimia succiniciproducens (strain KCTC 0769BP / MBEL55E).